Consider the following 200-residue polypeptide: 3-isopropylmalate dehydratase small subunit (200 aa).

The protein belongs to the LeuD family. LeuD type 1 subfamily. As to quaternary structure, heterodimer of LeuC and LeuD.

The catalysed reaction is (2R,3S)-3-isopropylmalate = (2S)-2-isopropylmalate. The protein operates within amino-acid biosynthesis; L-leucine biosynthesis; L-leucine from 3-methyl-2-oxobutanoate: step 2/4. Functionally, catalyzes the isomerization between 2-isopropylmalate and 3-isopropylmalate, via the formation of 2-isopropylmaleate. In Aliivibrio fischeri (strain ATCC 700601 / ES114) (Vibrio fischeri), this protein is 3-isopropylmalate dehydratase small subunit.